A 348-amino-acid chain; its full sequence is 4-hydroxy-3-methylbut-2-en-1-yl diphosphate synthase (flavodoxin) (348 aa).

Cysteine 263, cysteine 266, cysteine 298, and glutamate 305 together coordinate [4Fe-4S] cluster.

It belongs to the IspG family. Requires [4Fe-4S] cluster as cofactor.

It catalyses the reaction (2E)-4-hydroxy-3-methylbut-2-enyl diphosphate + oxidized [flavodoxin] + H2O + 2 H(+) = 2-C-methyl-D-erythritol 2,4-cyclic diphosphate + reduced [flavodoxin]. Its pathway is isoprenoid biosynthesis; isopentenyl diphosphate biosynthesis via DXP pathway; isopentenyl diphosphate from 1-deoxy-D-xylulose 5-phosphate: step 5/6. Converts 2C-methyl-D-erythritol 2,4-cyclodiphosphate (ME-2,4cPP) into 1-hydroxy-2-methyl-2-(E)-butenyl 4-diphosphate. The polypeptide is 4-hydroxy-3-methylbut-2-en-1-yl diphosphate synthase (flavodoxin) (Dehalococcoides mccartyi (strain CBDB1)).